The chain runs to 384 residues: Galactokinase (384 aa).

Residue 35–38 (EHTD) coordinates substrate. ATP is bound by residues Ser69 and 125–131 (GAGLSSS). Residues Ser131 and Glu163 each coordinate Mg(2+). The active-site Proton acceptor is the Asp175. Substrate is bound at residue Tyr224.

The protein belongs to the GHMP kinase family. GalK subfamily.

Its subcellular location is the cytoplasm. The enzyme catalyses alpha-D-galactose + ATP = alpha-D-galactose 1-phosphate + ADP + H(+). It participates in carbohydrate metabolism; galactose metabolism. In terms of biological role, catalyzes the transfer of the gamma-phosphate of ATP to D-galactose to form alpha-D-galactose-1-phosphate (Gal-1-P). This is Galactokinase from Aliivibrio fischeri (strain MJ11) (Vibrio fischeri).